The primary structure comprises 161 residues: MKISQFGSLAFAPIVLLQLFIVQAQLLTDSNAQDLNTALGQKVQYTFLDTGNSNDQLLHLPSTTSSSIITGSLAAANFTGSSSSSSIPKVTSSVITSINYQSSNSTVVTQFTPLPSSSRNETKSSQTTNTISSSTSTGGVGSVKPCLYFVLMLETIAYLFS.

Positions 1–24 (MKISQFGSLAFAPIVLLQLFIVQA) are cleaved as a signal peptide. 3 N-linked (GlcNAc...) asparagine glycosylation sites follow: Asn-77, Asn-104, and Asn-120. The tract at residues 111–139 (FTPLPSSSRNETKSSQTTNTISSSTSTGG) is disordered. A compositionally biased stretch (low complexity) spans 123-137 (KSSQTTNTISSSTST). A lipid anchor (GPI-anchor amidated glycine) is attached at Gly-139. The propeptide at 140 to 161 (VGSVKPCLYFVLMLETIAYLFS) is removed in mature form.

The GPI-anchor is attached to the protein in the endoplasmic reticulum and serves to target the protein to the cell surface. There, the glucosamine-inositol phospholipid moiety is cleaved off and the GPI-modified mannoprotein is covalently attached via its lipidless GPI glycan remnant to the 1,6-beta-glucan of the outer cell wall layer.

Its subcellular location is the secreted. The protein localises to the cell wall. It is found in the membrane. The sequence is that of Cell wall protein YLR042C from Saccharomyces cerevisiae (strain ATCC 204508 / S288c) (Baker's yeast).